Reading from the N-terminus, the 276-residue chain is MEQFKTYALMTGLTLLFIWFGGMIAGQTGMVIAFLVAAGMNFYAYYYSDQQVLSHYHAEPVDRAHASGLYQIVEKLTRRAGLPMPALYIIPEQQPNAFATGRNYEHAAVAVTEGLLDLMTDEEIEAVIAHELSHIKHYDMLIGTVAATIAGAIAMLANFGMFFGSGDRDRPNIFVMLALMFIMPMAASIIQMTVSRNREFMADEGSARMTGHPEWLQSALTKLDNYARSITLPEADPQTAHMFIINPFSGKDVSLKQLFSTHPSTEARIERLEALK.

The helical transmembrane segment at 16 to 36 (LFIWFGGMIAGQTGMVIAFLV) threads the bilayer. His-130 provides a ligand contact to Zn(2+). Glu-131 is a catalytic residue. His-134 serves as a coordination point for Zn(2+). 2 helical membrane passes run 142 to 162 (IGTV…FGMF) and 173 to 193 (IFVM…IQMT). Glu-199 contacts Zn(2+).

It belongs to the peptidase M48B family. Requires Zn(2+) as cofactor.

Its subcellular location is the cell inner membrane. The sequence is that of Protease HtpX homolog from Sulfurovum sp. (strain NBC37-1).